We begin with the raw amino-acid sequence, 395 residues long: L-rhamnonate dehydratase (395 aa).

His23 and Arg49 together coordinate substrate. Mg(2+) contacts are provided by Asp215, Glu241, and Glu269. The active-site Proton acceptor is the His319. Residue Glu339 coordinates substrate.

Belongs to the mandelate racemase/muconate lactonizing enzyme family. RhamD subfamily. In terms of assembly, homooctamer; tetramer of dimers. Requires Mg(2+) as cofactor.

The enzyme catalyses L-rhamnonate = 2-dehydro-3-deoxy-L-rhamnonate + H2O. Catalyzes the dehydration of L-rhamnonate to 2-keto-3-deoxy-L-rhamnonate (KDR). The chain is L-rhamnonate dehydratase from Delftia acidovorans (strain DSM 14801 / SPH-1).